Reading from the N-terminus, the 173-residue chain is Crossover junction endodeoxyribonuclease RuvC (173 aa).

Catalysis depends on residues Asp-8, Glu-67, and Asp-139. Residues Asp-8, Glu-67, and Asp-139 each contribute to the Mg(2+) site.

It belongs to the RuvC family. Homodimer which binds Holliday junction (HJ) DNA. The HJ becomes 2-fold symmetrical on binding to RuvC with unstacked arms; it has a different conformation from HJ DNA in complex with RuvA. In the full resolvosome a probable DNA-RuvA(4)-RuvB(12)-RuvC(2) complex forms which resolves the HJ. The cofactor is Mg(2+).

It localises to the cytoplasm. The enzyme catalyses Endonucleolytic cleavage at a junction such as a reciprocal single-stranded crossover between two homologous DNA duplexes (Holliday junction).. Its function is as follows. The RuvA-RuvB-RuvC complex processes Holliday junction (HJ) DNA during genetic recombination and DNA repair. Endonuclease that resolves HJ intermediates. Cleaves cruciform DNA by making single-stranded nicks across the HJ at symmetrical positions within the homologous arms, yielding a 5'-phosphate and a 3'-hydroxyl group; requires a central core of homology in the junction. The consensus cleavage sequence is 5'-(A/T)TT(C/G)-3'. Cleavage occurs on the 3'-side of the TT dinucleotide at the point of strand exchange. HJ branch migration catalyzed by RuvA-RuvB allows RuvC to scan DNA until it finds its consensus sequence, where it cleaves and resolves the cruciform DNA. This Shewanella baltica (strain OS223) protein is Crossover junction endodeoxyribonuclease RuvC.